A 92-amino-acid chain; its full sequence is Large ribosomal subunit protein uL23c (92 aa).

It belongs to the universal ribosomal protein uL23 family. In terms of assembly, part of the 50S ribosomal subunit.

It localises to the plastid. It is found in the chloroplast. In terms of biological role, binds to 23S rRNA. This Chara vulgaris (Common stonewort) protein is Large ribosomal subunit protein uL23c (rpl23).